Here is a 103-residue protein sequence, read N- to C-terminus: Large ribosomal subunit protein bL28 (103 aa).

Belongs to the bacterial ribosomal protein bL28 family.

The sequence is that of Large ribosomal subunit protein bL28 from Anaplasma marginale (strain St. Maries).